Consider the following 453-residue polypeptide: Chromosomal replication initiator protein DnaA (453 aa).

The tract at residues 1-73 (MNISPQYLWN…AQEVASVVGY (73 aa)) is domain I, interacts with DnaA modulators. The interval 73–112 (YPVDIQLTTAEGETMAMTGEAQSYQEKSLTQIAPESPKLN) is domain II. A domain III, AAA+ region region spans residues 113 to 329 (QLNPRYTFSR…GALIRAIAYT (217 aa)). ATP-binding residues include glycine 157, glycine 159, lysine 160, and threonine 161. The domain IV, binds dsDNA stretch occupies residues 330 to 453 (SISGLSMTVQ…RINMASRTQS (124 aa)).

Belongs to the DnaA family. As to quaternary structure, oligomerizes as a right-handed, spiral filament on DNA at oriC.

It localises to the cytoplasm. Functionally, plays an essential role in the initiation and regulation of chromosomal replication. ATP-DnaA binds to the origin of replication (oriC) to initiate formation of the DNA replication initiation complex once per cell cycle. Binds the DnaA box (a 9 base pair repeat at the origin) and separates the double-stranded (ds)DNA. Forms a right-handed helical filament on oriC DNA; dsDNA binds to the exterior of the filament while single-stranded (ss)DNA is stabiized in the filament's interior. The ATP-DnaA-oriC complex binds and stabilizes one strand of the AT-rich DNA unwinding element (DUE), permitting loading of DNA polymerase. After initiation quickly degrades to an ADP-DnaA complex that is not apt for DNA replication. Binds acidic phospholipids. In Rippkaea orientalis (strain PCC 8801 / RF-1) (Cyanothece sp. (strain PCC 8801)), this protein is Chromosomal replication initiator protein DnaA.